A 234-amino-acid chain; its full sequence is HTH-type transcriptional regulator SmoD (234 aa).

The HTH gntR-type domain occupies Leu-8–Val-76. Positions Glu-36–Ala-55 form a DNA-binding region, H-T-H motif.

It localises to the cytoplasm. Probably regulates expression of genes involved in the sulfoquinovose monooxygenase (sulfo-SMO) pathway (smoABCDEFGHI). This chain is HTH-type transcriptional regulator SmoD, found in Agrobacterium fabrum (strain C58 / ATCC 33970) (Agrobacterium tumefaciens (strain C58)).